We begin with the raw amino-acid sequence, 372 residues long: Forkhead box protein F1-B (372 aa).

The interval 1-51 (MTAEIQQPPSQPPAQSSPMSAATDKHGGQPSAMESASCATKTKKTNAGIRR) is disordered. The span at 13 to 22 (PAQSSPMSAA) shows a compositional bias: low complexity. Residues 54–148 (KPPYSYIALI…EEGSFRRRPR (95 aa)) constitute a DNA-binding region (fork-head).

At the late gastrula stage, expressed in the presumptive ventrolateral mesoderm. During neurulation and tailbud stages, expressed in the lateral plate mesoderm and in the neural crest-derived structures of the head and branchial arches. During tailbud stages, expressed in the pronephros and pronephros ducts and in cells that migrate from the dorsolateral plate to the ventral region of the embryo (with the notable exception of the heart). These cells may represent hematopoietic or endothelial progenitor cells.

It is found in the nucleus. Probable transcription factor. Required for smooth muscle (visceral mesoderm) differentiation during gut development. Also required for normal proliferation of the lateral plate mesoderm. Acts as a downstream mediator of bmp4-signaling. The protein is Forkhead box protein F1-B (foxf1-b) of Xenopus laevis (African clawed frog).